Consider the following 330-residue polypeptide: Aspartate--ammonia ligase (330 aa).

It belongs to the class-II aminoacyl-tRNA synthetase family. AsnA subfamily.

Its subcellular location is the cytoplasm. It catalyses the reaction L-aspartate + NH4(+) + ATP = L-asparagine + AMP + diphosphate + H(+). It participates in amino-acid biosynthesis; L-asparagine biosynthesis; L-asparagine from L-aspartate (ammonia route): step 1/1. The chain is Aspartate--ammonia ligase from Haemophilus ducreyi (strain 35000HP / ATCC 700724).